The chain runs to 230 residues: Ribose-5-phosphate isomerase A (230 aa).

Substrate is bound by residues 32-35, 85-88, and 98-101; these read TGST, DGAD, and KGGG. The Proton acceptor role is filled by E107. K125 lines the substrate pocket.

It belongs to the ribose 5-phosphate isomerase family. Homodimer.

The enzyme catalyses aldehydo-D-ribose 5-phosphate = D-ribulose 5-phosphate. It functions in the pathway carbohydrate degradation; pentose phosphate pathway; D-ribose 5-phosphate from D-ribulose 5-phosphate (non-oxidative stage): step 1/1. In terms of biological role, catalyzes the reversible conversion of ribose-5-phosphate to ribulose 5-phosphate. This chain is Ribose-5-phosphate isomerase A, found in Burkholderia vietnamiensis (strain G4 / LMG 22486) (Burkholderia cepacia (strain R1808)).